Here is a 472-residue protein sequence, read N- to C-terminus: Carboxypeptidase Q (472 aa).

An N-terminal signal peptide occupies residues 1–20 (MKFLIFAFFGGVHLLSLCSG). Residues 21–44 (KAICKNGISKRTFEEIKEEIASCG) constitute a propeptide that is removed on maturation. N-linked (GlcNAc...) asparagine glycans are attached at residues N61 and N179. Zn(2+) is bound by residues H290 and D302. E336 acts as the Nucleophile in catalysis. E337 serves as a coordination point for Zn(2+). 2 N-linked (GlcNAc...) asparagine glycosylation sites follow: N353 and N356. Residue D364 participates in Zn(2+) binding. N396 carries an N-linked (GlcNAc...) asparagine glycan. Position 434 (H434) interacts with Zn(2+).

The protein belongs to the peptidase M28 family. Homodimer. The monomeric form is inactive while the homodimer is active. N-glycosylated. The secreted form is modified by hybrid or complex type oligosaccharide chains. In terms of tissue distribution, mainly detected in blood plasma. Abundant in placenta and kidney. Present at low level in muscles, liver and skin fibroblasts. Not detected in brain or white blood cells (at protein level).

Its subcellular location is the endoplasmic reticulum. It localises to the golgi apparatus. The protein resides in the lysosome. The protein localises to the secreted. Functionally, carboxypeptidase that may play an important role in the hydrolysis of circulating peptides. Catalyzes the hydrolysis of dipeptides with unsubstituted terminals into amino acids. May play a role in the liberation of thyroxine hormone from its thyroglobulin (Tg) precursor. The sequence is that of Carboxypeptidase Q (CPQ) from Homo sapiens (Human).